The sequence spans 265 residues: 3-methyl-2-oxobutanoate hydroxymethyltransferase (265 aa).

Mg(2+)-binding residues include D44 and D83. 3-methyl-2-oxobutanoate-binding positions include 44–45 (DS), D83, and K113. Residue E115 coordinates Mg(2+). E182 functions as the Proton acceptor in the catalytic mechanism.

This sequence belongs to the PanB family. As to quaternary structure, homodecamer; pentamer of dimers. Mg(2+) serves as cofactor.

Its subcellular location is the cytoplasm. The catalysed reaction is 3-methyl-2-oxobutanoate + (6R)-5,10-methylene-5,6,7,8-tetrahydrofolate + H2O = 2-dehydropantoate + (6S)-5,6,7,8-tetrahydrofolate. It participates in cofactor biosynthesis; (R)-pantothenate biosynthesis; (R)-pantoate from 3-methyl-2-oxobutanoate: step 1/2. Its function is as follows. Catalyzes the reversible reaction in which hydroxymethyl group from 5,10-methylenetetrahydrofolate is transferred onto alpha-ketoisovalerate to form ketopantoate. The sequence is that of 3-methyl-2-oxobutanoate hydroxymethyltransferase from Aquifex aeolicus (strain VF5).